The chain runs to 561 residues: Putative transport protein Ent638_1362 (561 aa).

5 helical membrane passes run 8 to 28 (LLNG…LCLG), 32 to 52 (LGSV…LLGQ), 66 to 86 (FMLF…SIFF), 94 to 114 (MLAL…GKLF), and 158 to 178 (HLSL…IVAA). 2 RCK C-terminal domains span residues 202–288 (LDTD…SFRN) and 292–373 (VFDR…RIGF). A run of 5 helical transmembrane segments spans residues 383–403 (LLAF…TFQF), 406–426 (FSFG…LGFL), 447–467 (FGLM…IGHS), 475–495 (MLVA…LFGA), and 540–560 (AIAN…WPGL).

It belongs to the AAE transporter (TC 2.A.81) family. YbjL subfamily.

It is found in the cell membrane. This Enterobacter sp. (strain 638) protein is Putative transport protein Ent638_1362.